The sequence spans 414 residues: Enolase (414 aa).

Gln-162 is a (2R)-2-phosphoglycerate binding site. Glu-204 (proton donor) is an active-site residue. Mg(2+)-binding residues include Asp-239, Glu-280, and Asp-307. (2R)-2-phosphoglycerate is bound by residues Lys-332, Arg-361, Ser-362, and Lys-383. The active-site Proton acceptor is Lys-332.

It belongs to the enolase family. It depends on Mg(2+) as a cofactor.

It localises to the cytoplasm. The protein localises to the secreted. The protein resides in the cell surface. The catalysed reaction is (2R)-2-phosphoglycerate = phosphoenolpyruvate + H2O. It functions in the pathway carbohydrate degradation; glycolysis; pyruvate from D-glyceraldehyde 3-phosphate: step 4/5. Its function is as follows. Catalyzes the reversible conversion of 2-phosphoglycerate (2-PG) into phosphoenolpyruvate (PEP). It is essential for the degradation of carbohydrates via glycolysis. In Campylobacter jejuni subsp. jejuni serotype O:6 (strain 81116 / NCTC 11828), this protein is Enolase.